The primary structure comprises 143 residues: Transcriptional regulator MraZ (143 aa).

SpoVT-AbrB domains lie at 5-47 (EYQH…PLNE) and 76-119 (ATEC…SDER).

This sequence belongs to the MraZ family. In terms of assembly, forms oligomers.

Its subcellular location is the cytoplasm. The protein localises to the nucleoid. In Enterococcus faecalis (strain ATCC 700802 / V583), this protein is Transcriptional regulator MraZ.